The chain runs to 317 residues: Gluconeogenesis factor (317 aa).

It belongs to the gluconeogenesis factor family.

It localises to the cytoplasm. Its function is as follows. Required for morphogenesis under gluconeogenic growth conditions. Required, in gluconeogenic growth conditions, for the correct localization of PBP1 and hence for displaying a normal rod shape. The sequence is that of Gluconeogenesis factor (mgfK) from Bacillus subtilis (strain 168).